A 342-amino-acid chain; its full sequence is Methylthioribose-1-phosphate isomerase (342 aa).

Residues 49–51 (RGA), Arg86, and Gln187 each bind substrate. The active-site Proton donor is Asp228. A substrate-binding site is contributed by 238-239 (NK).

Belongs to the eIF-2B alpha/beta/delta subunits family. MtnA subfamily.

The catalysed reaction is 5-(methylsulfanyl)-alpha-D-ribose 1-phosphate = 5-(methylsulfanyl)-D-ribulose 1-phosphate. The protein operates within amino-acid biosynthesis; L-methionine biosynthesis via salvage pathway; L-methionine from S-methyl-5-thio-alpha-D-ribose 1-phosphate: step 1/6. Its function is as follows. Catalyzes the interconversion of methylthioribose-1-phosphate (MTR-1-P) into methylthioribulose-1-phosphate (MTRu-1-P). The chain is Methylthioribose-1-phosphate isomerase from Klebsiella pneumoniae (strain 342).